We begin with the raw amino-acid sequence, 320 residues long: Olfactory receptor 51E2 (320 aa).

Residues 1 to 27 lie on the Extracellular side of the membrane; the sequence is MSSCNFTHATFLLIGIPGLEEAHFWFG. An N-linked (GlcNAc...) asparagine glycan is attached at Asn-5. A helical membrane pass occupies residues 28–48; it reads FPLLSMYAVALFGNCIVVFIV. The Cytoplasmic portion of the chain corresponds to 49-53; that stretch reads RTERS. Residues 54-74 form a helical membrane-spanning segment; that stretch reads LHAPMYLFLCMLAAIDLALST. Over 75 to 98 the chain is Extracellular; sequence STMPKILALFWFDSREITFDACLA. Cys-96 and Cys-178 are disulfide-bonded. The helical transmembrane segment at 99–119 threads the bilayer; that stretch reads QMFFIHTLSAIESTILLAMAF. Residues 120–141 are Cytoplasmic-facing; it reads DRYVAICHPLRHAAVLNNTVTV. Residues 142–162 traverse the membrane as a helical segment; it reads QIGMVALVRGSLFFFPLPLLI. Topologically, residues 163–200 are extracellular; sequence KRLAFCHSNVLSHSYCVHQDVMKLAYTDTLPNVVYGLT. The chain crosses the membrane as a helical span at residues 201 to 221; it reads AILLVMGVDVMFISLSYFLII. Topologically, residues 222 to 239 are cytoplasmic; sequence RTVLQLPSKSERAKAFGT. Residues 240–260 form a helical membrane-spanning segment; it reads CVSHISVVLAFYVPLIGLSVV. Residues 261-269 lie on the Extracellular side of the membrane; sequence HRFGNSLDP. A helical transmembrane segment spans residues 270-290; that stretch reads IVHVLMGDVYLLLPPVINPII. Over 291–320 the chain is Cytoplasmic; the sequence is YGAKTKQIRTRVLAMFKISCDKDIEAGGNT.

The protein belongs to the G-protein coupled receptor 1 family. In brain, expressed in medulla oblongata by cells close to the fourth ventricle, in the area postrema, the nucleus tractus solitarius. Expressed in olfactory epithelium and vomeronasal organ. Expressed in kidney by large renal vessels, renal afferent arterioles, and extrarenal vascular beds. In small resistance vessels the expression is restricted to cells of the juxtaglomerular afferent arteriole, which mediate renin secretion. Also detected in small blood vessels in a variety of tissues including heart, diaphragm, skeletal muscle, and skin. In the heart, esophagus, and stomach it is detected in axons of autonomic neurons and neurons of the enteric plexus. Also detected in colon and liver. Expressed in the glomus cells of the carotid body.

It localises to the cell membrane. The protein localises to the early endosome membrane. Functionally, olfactory receptor. The activity of this receptor is probably mediated by G-proteins which induce elevation of intracellular Ca(2+), cAMP and activation of phosphorylation of the protein kinases PKA and MAPK3/MAPK1. Activation of OR51E2 may affect melanocyte proliferation, differentiation, and melanogenesis and may increase proliferation and migration of primary retinal pigment epithelial (RPE) cells. Activated by the short chain fatty acids (SCFA), acetate and propionate. In response to SCFA, may positively regulate renin secretion and increase blood pressure. May also be activated by steroid hormones and regulate cell proliferation. Activated by L-lactate in glomus cells. The protein is Olfactory receptor 51E2 (Or51e2) of Mus musculus (Mouse).